We begin with the raw amino-acid sequence, 320 residues long: Thiamine thiazole synthase (320 aa).

Substrate contacts are provided by residues Cys82, 103–104 (EA), Gly111, and Val176. Cys209 is subject to 2,3-didehydroalanine (Cys). Residues Asp211, His226, Met278, and 288 to 290 (RMG) contribute to the substrate site.

This sequence belongs to the THI4 family. Homooctamer. The cofactor is Fe cation. In terms of processing, during the catalytic reaction, a sulfide is transferred from Cys-209 to a reaction intermediate, generating a dehydroalanine residue.

Its subcellular location is the cytoplasm. The protein resides in the nucleus. It carries out the reaction [ADP-thiazole synthase]-L-cysteine + glycine + NAD(+) = [ADP-thiazole synthase]-dehydroalanine + ADP-5-ethyl-4-methylthiazole-2-carboxylate + nicotinamide + 3 H2O + 2 H(+). Its function is as follows. Involved in biosynthesis of the thiamine precursor thiazole. Catalyzes the conversion of NAD and glycine to adenosine diphosphate 5-(2-hydroxyethyl)-4-methylthiazole-2-carboxylic acid (ADT), an adenylated thiazole intermediate. The reaction includes an iron-dependent sulfide transfer from a conserved cysteine residue of the protein to a thiazole intermediate. The enzyme can only undergo a single turnover, which suggests it is a suicide enzyme. May have additional roles in adaptation to various stress conditions and in DNA damage tolerance. This chain is Thiamine thiazole synthase (sti35), found in Fusarium oxysporum f. sp. lycopersici (strain 4287 / CBS 123668 / FGSC 9935 / NRRL 34936) (Fusarium vascular wilt of tomato).